A 1450-amino-acid chain; its full sequence is MEAGYAEIAAVQFNIAGDNDHKRQGVMEVTISNLFEGTLPAEGGIYDARMGTTDHHYKCITCSHQRKQCMGHPGILQMHAPVLQPLFIAEIRRWLRVICLNCGAPIVDLKRYEHLIRPKRLIEAASSQTEGKQCYVCKAVHPKIIKDSEDYFTFWVDQQGKIDKLYPQIIREIFSRVTYDTVVKLGRSKNSHPEKLVLKAIQIPPISIRPGIRLGIGSGPQSFHDINNVIQYLVRKNLLIPKDLQIVRGQKIPLNIDRNLQTIQQLYYNFLLDSVSTTATQGGTGKRGIVMGARPAPSIMRRLPRKEGRIRKSLLGSQVWSISRSTICGNSDLHLDEVGYPISFARTLQVAETVQHYNINRLMPYFLNGKRQYPGCSRVYKQITQSVHDIEGLKQDFRLEVGDILYRDVVTGDVAFFNRQPSLERSSIGVHRIVVLENPKISTFQMNVSACAWYNADFDGDQMNLWVPWSVMSRVEAELLCSVRNWFISTKSSGPVNGQVQDSTVGSFLLTRTNTPMGKNVMNKLHAMGLFQTTQTDPPCFANYSPTDLLDGKSVVSMLLRQTPINYQRAPTWYSEVYAPYMHYNKQDISTQIRNGELIEGVLDKKAVGAGSSGGIYHLISRRYGPQQALKMIFATQQLALNYVRNAGFTVSTADMLLTPEAHQEVQEIINELLLESEEINNRLLHGDIMPPIGLTTHDFYEKLQLNALKFPDRILKPIMNSINPETNGLFQMVATGAKGSNPNMIHIMAGIGQIEINTQRIQPQFSFGRTLVYYPRFALEAQAYGFICNSYIAGLTSPEFIFGEMNGRFDLINKALSTSSTGYANRKAIFGLQSCIVDYYRRVSIDTRLVQQLYGEDGLDARQLETVRFETIMLSDQELEDKFKYTGIQSPLFEEEFSRLKKDRDKYRQIFLNVENFNFSQLLTDVRQVPVNVASIVKNILLSSASGVLPFDEKTILQKYTMVKTFCKNLPYVFINNIQERLQTPIPVYLKRAASLMRMLIRIELATVKTLNITCEQMSAILDLIRLQYTQSLINYGEAVGILAAQSVSEPLTQYMLDSHHRSVAGGTNKSGIVRPQEIFSAKPVEAEQSSEMLLRLKNPEVETNKTYAQEIANSIELITFERLILQWHLLYETYSSTKKNVMYPDFASDVEWMTDFLENHPLLQPPEDIANWCIRLELNKTTMILKSISLESIINSLRAKHPNTYIMHSVENTASGIPIIIRIYLRESAFRRSTNTRMATDEKIAVNVVDKLLNSTIRGIPGIKNANVVKLMRHRVDAQGKLVRLDNIYAIKTNGTNIFGAMLDDNIDPYTIVSSSIGDTMELYGIEAARQKIISEIRTVMGDKGPNHRHLLMYADLMTRTGQVTSLEKAGLNAREPSNVLLRMALSSPVQVLTDAAVDSAVNPIYGIAAPTLMGSVPRIGTMYSDIIMDEKYITENYKSVDSMIDML.

This sequence belongs to the RNA polymerase beta' chain family. Part of the viral DNA-directed RNA polymerase that consists of 8 polII-like subunits (RPB1, RPB2, RPB3, RPB5, RPB6, RPB7, RPB9, RPB10), a capping enzyme and a termination factor.

It localises to the virion. It catalyses the reaction RNA(n) + a ribonucleoside 5'-triphosphate = RNA(n+1) + diphosphate. Functionally, catalytic component of the DNA-directed RNA polymerase (RNAP) that catalyzes the transcription in the cytoplasm of viral DNA into RNA using the four ribonucleoside triphosphates as substrates. Forms the polymerase active center together with RPB2. Part of the core element with the central large cleft, the clamp element that moves to open and close the cleft and the jaws that are thought to grab the incoming DNA template. This African swine fever virus (isolate Warthog/Namibia/Wart80/1980) (ASFV) protein is DNA-directed RNA polymerase RPB1 homolog.